The following is a 1394-amino-acid chain: Leucine-rich PPR motif-containing protein, mitochondrial (1394 aa).

The transit peptide at 1-59 directs the protein to the mitochondrion; it reads MAALLRSARWLLRAGAAPRLPLSLRLLPGGPGRLHAASYLPAARAGPVAGGLLSPARLY. PPR repeat units follow at residues 126-160, 161-195, 196-230, 231-265, 266-300, 301-335, 403-437, and 438-472; these read LLRS…GAVY, DVSH…NIQP, NRVT…DLPV, TEAV…GIEP, GPDT…ELHL, MDRD…RRYI, HSFP…GFPI, and RPHY…GVHP. N6-acetyllysine occurs at positions 155, 187, and 226. K292 carries the N6-acetyllysine modification. 2 positions are modified to N6-acetyllysine: K463 and K613. PPR repeat units follow at residues 678-709, 710-746, 747-784, 785-820, 821-856, and 954-988; these read IRDV…ESDM, VTGG…SAVL, DTGK…IKDT, TALS…LAEP, STNI…KVLP, and RDQM…NVIP. The interval 712–1067 is interaction with BECN1 and Aedes aegypti venom allergen-1; the sequence is GGYAALINLC…AKEQNIVFNA (356 aa). An N6-acetyllysine mark is found at K726 and K750. Phosphoserine is present on residues S1026, S1027, and S1029. 6 PPR repeats span residues 1031 to 1065, 1066 to 1102, 1103 to 1137, 1138 to 1175, 1176 to 1210, and 1317 to 1351; these read TEPD…NIVF, NAET…GFTL, NDAA…QQTP, SRLA…IGLS, KMVF…ENKV, and KEEA…NTKL. An RNA-binding region spans residues 1121–1394; that stretch reads KEAVTTLKTV…QLRKLRENSS (274 aa). T1136 carries the post-translational modification Phosphothreonine. S1138 bears the Phosphoserine mark.

As to quaternary structure, component of mRNP complexes associated with HNRPA1. Component of the complex, at least composed of LRPPRC, BECN1 and BCL2; the interactions prevent BECN1 from forming an autophagy-inducing complex with PIK3C3. Interacts with CECR2, HEBP2, MAP1S and UXT. Interacts with PPARGC1A. Interacts with FOXO1. Interacts (via N-terminus) with EIF4E; the interaction promotes association of EIF4E with 4ESE-containing mRNAs. Interacts with exportin XPO1/CRM1; interacts both alone and in complex with EIF4E and 4ESE-containing mRNAs to form an EIF4E-dependent mRNA export complex. Interacts with importin IPO8; the interaction occurs when LRPPRC is in its RNA-free form and returns LRPPRC to the nucleus for further export rounds. Interacts with BECN1. Interacts with Aedes aegypti venom allergen-1; the interaction interrupts BECN1 and LRPPRC association. As to expression, expressed ubiquitously. Expression is highest in heart, skeletal muscle, kidney and liver, intermediate in brain, non-mucosal colon, spleen and placenta, and lowest in small intestine, thymus, lung and peripheral blood leukocytes.

It is found in the mitochondrion. The protein resides in the nucleus. It localises to the nucleoplasm. Its subcellular location is the nucleus inner membrane. The protein localises to the nucleus outer membrane. In terms of biological role, may play a role in RNA metabolism in both nuclei and mitochondria. In the nucleus binds to HNRPA1-associated poly(A) mRNAs and is part of nmRNP complexes at late stages of mRNA maturation which are possibly associated with nuclear mRNA export. Positively modulates nuclear export of mRNAs containing the EIF4E sensitivity element (4ESE) by binding simultaneously to both EIF4E and the 4ESE and acting as a platform for assembly for the RNA export complex. Also binds to exportin XPO1/CRM1 to engage the nuclear pore and traffic the bound mRNAs to the cytoplasm. May bind mature mRNA in the nucleus outer membrane. In mitochondria binds to poly(A) mRNA. Plays a role in translation or stability of mitochondrially encoded cytochrome c oxidase (COX) subunits. May be involved in transcription regulation. Cooperates with PPARGC1A to regulate certain mitochondrially encoded genes and gluconeogenic genes and may regulate docking of PPARGC1A to transcription factors. Seems to be involved in the transcription regulation of the multidrug-related genes MDR1 and MVP. Part of a nuclear factor that binds to the invMED1 element of MDR1 and MVP gene promoters. Binds single-stranded DNA. Required for maintaining mitochondrial potential. Suppresses the initiation of basal levels of autophagy and mitophagy by sustaining BCL2 levels. In Homo sapiens (Human), this protein is Leucine-rich PPR motif-containing protein, mitochondrial (LRPPRC).